A 1938-amino-acid chain; its full sequence is Autophagy-related protein 2 homolog A (1938 aa).

In terms of domain architecture, Chorein N-terminal spans 14 to 111; that stretch reads ERVCRYLLHH…QLTLQPRRGP (98 aa). 7 positions are modified to phosphoserine: Ser-765, Ser-878, Ser-892, Ser-894, Ser-1266, Ser-1301, and Ser-1309. Positions 1242–1272 are disordered; sequence DLHPPPRPPSPTEIAGQKLSESPASLPSCPP. Positions 1315 to 1359 are disordered; it reads LFPGERSGAPPPSPPVGGPAGSLGSCSEEKEDEREEEGDGDTLDS. A compositionally biased stretch (acidic residues) spans 1343 to 1359; it reads EKEDEREEEGDGDTLDS. A WIPI-interacting region spans residues 1358–1404; sequence DSDEFCILDAPGLGIPPRDGEPVVTQLHPGPIVVRDGYFSRPIGSTD. Ser-1402 is subject to Phosphoserine. Disordered stretches follow at residues 1438-1476 and 1614-1657; these read PHPGHRARTGLSGPRSSPSRCSGPNRPQNSWRTQGGSGR and GETS…PSPP. The segment covering 1446-1464 has biased composition (low complexity); that stretch reads TGLSGPRSSPSRCSGPNRP.

This sequence belongs to the ATG2 family. Interacts with ATG9A (via C-terminus). Interacts (via WIPI-interacting region) with WDR45B/WIPI3. Interacts (via WIPI-interacting region) with WDR45/WIPI4. Interacts with TMEM41B. Interacts with VMP1.

It is found in the preautophagosomal structure membrane. It localises to the lipid droplet. The protein localises to the endoplasmic reticulum membrane. It carries out the reaction a 1,2-diacyl-sn-glycero-3-phospho-L-serine(in) = a 1,2-diacyl-sn-glycero-3-phospho-L-serine(out). It catalyses the reaction a 1,2-diacyl-sn-glycero-3-phosphoethanolamine(in) = a 1,2-diacyl-sn-glycero-3-phosphoethanolamine(out). Lipid transfer protein involved in autophagosome assembly. Tethers the edge of the isolation membrane (IM) to the endoplasmic reticulum (ER) and mediates direct lipid transfer from ER to IM for IM expansion. Binds to the ER exit site (ERES), which is the membrane source for autophagosome formation, and extracts phospholipids from the membrane source and transfers them to ATG9 (ATG9A or ATG9B) to the IM for membrane expansion. Lipid transfer activity is enhanced by WIPI1 and WDR45/WIPI4, which promote ATG2A-association with phosphatidylinositol 3-monophosphate (PI3P)-containing membranes. Also regulates lipid droplets morphology and distribution within the cell. This chain is Autophagy-related protein 2 homolog A, found in Homo sapiens (Human).